Consider the following 127-residue polypeptide: MFRTMLGGKIHRATVTEADLNYVGSITVDQDLLDAAGIYPNEKVAIVNNNNGERFETYTISGKRGSGVVCLNGAAARLVQKGDIVIIMSYVQLSEPEIAAHEPKVVLVDGNNKIRDIISYEPPHTVL.

Catalysis depends on Ser25, which acts as the Schiff-base intermediate with substrate; via pyruvic acid. Ser25 is modified (pyruvic acid (Ser)). Thr57 is a substrate binding site. Tyr58 serves as the catalytic Proton donor. Residue 73-75 (GAA) coordinates substrate.

It belongs to the PanD family. As to quaternary structure, heterooctamer of four alpha and four beta subunits. The cofactor is pyruvate. Is synthesized initially as an inactive proenzyme, which is activated by self-cleavage at a specific serine bond to produce a beta-subunit with a hydroxyl group at its C-terminus and an alpha-subunit with a pyruvoyl group at its N-terminus.

The protein resides in the cytoplasm. The catalysed reaction is L-aspartate + H(+) = beta-alanine + CO2. It functions in the pathway cofactor biosynthesis; (R)-pantothenate biosynthesis; beta-alanine from L-aspartate: step 1/1. Functionally, catalyzes the pyruvoyl-dependent decarboxylation of aspartate to produce beta-alanine. This chain is Aspartate 1-decarboxylase, found in Neisseria meningitidis serogroup C / serotype 2a (strain ATCC 700532 / DSM 15464 / FAM18).